A 443-amino-acid polypeptide reads, in one-letter code: Transcriptional adapter 2-alpha (443 aa).

Serine 6 carries the post-translational modification Phosphoserine. A ZZ-type zinc finger spans residues 12 to 69; that stretch reads SDKPPCRGCSSYLMEPYIKCAECGPPPFFLCLQCFTRGFEYKKHQSDHTYEIMTSDFP. Zn(2+) is bound by residues cysteine 17, cysteine 20, cysteine 31, cysteine 34, cysteine 42, cysteine 45, histidine 55, and histidine 59. An SANT domain is found at 70-122; it reads VLDPSWTAQEEMALLEAVMDCGFGNWQDVANQMCTKTKEECEKHYMKHFINNP. Glycyl lysine isopeptide (Lys-Gly) (interchain with G-Cter in SUMO2) cross-links involve residues lysine 132 and lysine 138. In terms of domain architecture, SWIRM spans 356-443; sequence NSGRRSAPPL…LIREGYITKA (88 aa). A DNA-binding region spans residues 426-435; sequence KTRKIYDFLI.

As to quaternary structure, interacts with GCN5 and NR3C1. Associated with the P/CAF protein in the PCAF complex. Component of the PCAF complex, at least composed of TADA2L/ADA2, TADA3L/ADA3, TAF5L/PAF65-beta, TAF6L/PAF65-alpha, TAF10/TAFII30, TAF12/TAFII20, TAF9/TAFII31 and TRRAP. Component of the ADA2A-containing complex (ATAC), composed of KAT14, KAT2A, TADA2L, TADA3L, ZZ3, MBIP, WDR5, YEATS2, CCDC101 and DR1. Interacts with CCDC134.

It localises to the nucleus. The protein localises to the chromosome. Its function is as follows. Component of the ATAC complex, a complex with histone acetyltransferase activity on histones H3 and H4. Required for the function of some acidic activation domains, which activate transcription from a distant site. Binds double-stranded DNA. Binds dinucleosomes, probably at the linker region between neighboring nucleosomes. Plays a role in chromatin remodeling. May promote TP53/p53 'Lys-321' acetylation, leading to reduced TP53 stability and transcriptional activity. May also promote XRCC6 acetylation thus facilitating cell apoptosis in response to DNA damage. The chain is Transcriptional adapter 2-alpha (Tada2a) from Rattus norvegicus (Rat).